Here is a 423-residue protein sequence, read N- to C-terminus: MTIPAPIPDKAESSLSFTQGLLLGQLSIVILIGAFIKFFIFGDPPSPDVTAALRATERRSRTLAHKRSLLTLRSSTPRRASQPLNRKRSSVLRNPAPLTTNAILSKTYYNVDSHQPESLDWFNVLIAQTIAQFRADAQHDDAILTSLTKVLNGGNRPDFLDEIKVTELSLGEDFPIFSNCRVIPVDEDGMTLGREGGAAGREHGRLQARMDVDLSDFITLAVETKLLLNYPKPLVAVLPVALAVSVVRFSGTLSISFVPGSPLNGSPTTLAFCFLDDYRLDLSIRSLVGSRSRLQDVPKIAQLIEARLHTWFDERCVEPRFQQIELPSLWPRKKNTRGGEDLDTGSDAGGIGRARSRDVERDLREEARKEVEAETGIRVGRSKLGVSLDVPDEGSEDGLRFRRKSKGRDEYAMPGSMPGLSMT.

The Lumenal segment spans residues 1–20 (MTIPAPIPDKAESSLSFTQG). A helical membrane pass occupies residues 21-41 (LLLGQLSIVILIGAFIKFFIF). Residues 42-423 (GDPPSPDVTA…PGSMPGLSMT (382 aa)) are Cytoplasmic-facing. Positions 115 to 327 (QPESLDWFNV…EPRFQQIELP (213 aa)) constitute an SMP-LTD domain. Disordered stretches follow at residues 332–372 (RKKN…KEVE) and 387–423 (SLDVPDEGSEDGLRFRRKSKGRDEYAMPGSMPGLSMT). Over residues 355-372 (RSRDVERDLREEARKEVE) the composition is skewed to basic and acidic residues.

Belongs to the MMM1 family. In terms of assembly, homodimer. Component of the ER-mitochondria encounter structure (ERMES) or MDM complex, composed of MMM1, MDM10, MDM12 and MDM34. An MMM1 homodimer associates with one molecule of MDM12 on each side in a pairwise head-to-tail manner, and the SMP-LTD domains of MMM1 and MDM12 generate a continuous hydrophobic tunnel for phospholipid trafficking.

Its subcellular location is the endoplasmic reticulum membrane. Functionally, component of the ERMES/MDM complex, which serves as a molecular tether to connect the endoplasmic reticulum (ER) and mitochondria. Components of this complex are involved in the control of mitochondrial shape and protein biogenesis, and function in nonvesicular lipid trafficking between the ER and mitochondria. The MDM12-MMM1 subcomplex functions in the major beta-barrel assembly pathway that is responsible for biogenesis of all outer membrane beta-barrel proteins, and acts in a late step after the SAM complex. The MDM10-MDM12-MMM1 subcomplex further acts in the TOM40-specific pathway after the action of the MDM12-MMM1 complex. Essential for establishing and maintaining the structure of mitochondria and maintenance of mtDNA nucleoids. The polypeptide is Maintenance of mitochondrial morphology protein 1 (Botryotinia fuckeliana (strain B05.10) (Noble rot fungus)).